The chain runs to 349 residues: Deoxyguanosinetriphosphate triphosphohydrolase-like protein (349 aa).

The region spanning 80–197 is the HD domain; that stretch reads RLTHTLEVAQ…VKYSDKIAYV (118 aa).

It belongs to the dGTPase family. Type 2 subfamily.

The sequence is that of Deoxyguanosinetriphosphate triphosphohydrolase-like protein from Clostridium tetani (strain Massachusetts / E88).